The following is a 168-amino-acid chain: Nicotinamide-nucleotide adenylyltransferase (168 aa).

The protein belongs to the archaeal NMN adenylyltransferase family.

The protein localises to the cytoplasm. It catalyses the reaction beta-nicotinamide D-ribonucleotide + ATP + H(+) = diphosphate + NAD(+). It participates in cofactor biosynthesis; NAD(+) biosynthesis; NAD(+) from nicotinamide D-ribonucleotide: step 1/1. The chain is Nicotinamide-nucleotide adenylyltransferase from Methanoculleus marisnigri (strain ATCC 35101 / DSM 1498 / JR1).